A 624-amino-acid polypeptide reads, in one-letter code: Ubiquilin-2 (624 aa).

Disordered regions lie at residues 1 to 32 and 106 to 141; these read MAEN…EPKI and NRPQ…TNSN. An N-acetylalanine modification is found at alanine 2. Low complexity predominate over residues 15-32; sequence RGPAAAQGSAAAPAEPKI. The Ubiquitin-like domain occupies 33 to 107; sequence IKVTVKTPKE…VHLVIKSQNR (75 aa). Residues 106-115 show a composition bias toward polar residues; it reads NRPQGQSTQP. The segment covering 116-141 has biased composition (low complexity); the sequence is SNAAGTNTTSASTPRSNSTPISTNSN. STI1 domains lie at 178-206 and 208-247; these read SPEM…QLIM and NPQM…MQEM. The interval 287–349 is disordered; that stretch reads FGGNPFASVG…SGSGNSSSNA (63 aa). The span at 294 to 304 shows a compositional bias: low complexity; it reads SVGSSSSSGEG. Over residues 316 to 325 the composition is skewed to pro residues; it reads LPNPWAPPPA. Positions 326–349 are enriched in low complexity; sequence TQSSATTSTTTSTGSGSGNSSSNA. 2 consecutive STI1 domains span residues 379–426 and 430–462; these read NPQL…QEQM and LPAF…QQGL. Tandem repeats lie at residues 491 to 493, 494 to 496, 497 to 499, 500 to 502, 503 to 505, 506 to 508, 509 to 511, 512 to 514, 515 to 517, 518 to 520, 521 to 523, and 524 to 526. The 12 X 3 AA tandem repeats of P-X-X stretch occupies residues 491 to 526; sequence PVGPVTPIGPIGPIVPFTPIGPIGPIGPTGPAAPPG. The segment at 512-556 is disordered; the sequence is PIGPIGPTGPAAPPGSTGSGGPTGPTVSSAAPSETTSPTSESGPN. The segment covering 535 to 553 has biased composition (low complexity); the sequence is GPTVSSAAPSETTSPTSES. The 41-residue stretch at 581–621 folds into the UBA domain; it reads RFQQQLEQLNAMGFLNREANLQALIATGGDINAAIERLLGS.

Homodimer. Forms heterodimer with UBQLN1. Binds UBE3A and BTRC. Interacts with the 19S proteasome subunit. Interacts with C9orf72. Interacts with HNRNPA1 and HNRNPU. Found in a complex with UBQLN1 and MAP1LC3A/B/C. Interacts with EPS15, EPN1 and EPN2. Interacts with HERPUD1. Interacts with RAD23A. Interacts with TARDBP. Interacts (via C-terminus) with FAF2 (via N-terminus). Interacts with UBQLN4. Binds CD47. Degraded during macroautophagy.

The protein localises to the cytoplasm. It localises to the nucleus. It is found in the membrane. Its subcellular location is the cytoplasmic vesicle. The protein resides in the autophagosome. Functionally, plays an important role in the regulation of different protein degradation mechanisms and pathways including ubiquitin-proteasome system (UPS), autophagy and the endoplasmic reticulum-associated protein degradation (ERAD) pathway. Mediates the proteasomal targeting of misfolded or accumulated proteins for degradation by binding (via UBA domain) to their polyubiquitin chains and by interacting (via ubiquitin-like domain) with the subunits of the proteasome. Plays a role in the ERAD pathway via its interaction with ER-localized proteins FAF2/UBXD8 and HERPUD1 and may form a link between the polyubiquitinated ERAD substrates and the proteasome. Involved in the regulation of macroautophagy and autophagosome formation; required for maturation of autophagy-related protein LC3 from the cytosolic form LC3-I to the membrane-bound form LC3-II and may assist in the maturation of autophagosomes to autolysosomes by mediating autophagosome-lysosome fusion. Negatively regulates the endocytosis of GPCR receptors: AVPR2 and ADRB2, by specifically reducing the rate at which receptor-arrestin complexes concentrate in clathrin-coated pits (CCPs). This is Ubiquilin-2 (UBQLN2) from Homo sapiens (Human).